The primary structure comprises 226 residues: Thioredoxin domain-containing protein 9 (226 aa).

In terms of domain architecture, Thioredoxin spans 75–180; that stretch reads EIGSERDFFQ…TTETLEWRLG (106 aa). Ser188, Ser221, and Ser223 each carry phosphoserine.

In terms of assembly, forms ternary complexes with the chaperonin TCP1 complex, spanning the cylindrical chaperonin cavity and contacting at least 2 subunits. In terms of tissue distribution, expressed in testis, liver, heart, kidney, brain, spleen and lung.

Its subcellular location is the cytoplasm. The protein localises to the nucleus. It localises to the cytoskeleton. It is found in the microtubule organizing center. The protein resides in the centrosome. Its subcellular location is the midbody. Significantly diminishes the chaperonin TCP1 complex ATPase activity, thus negatively impacts protein folding, including that of actin or tubulin. The sequence is that of Thioredoxin domain-containing protein 9 (Txndc9) from Mus musculus (Mouse).